The sequence spans 103 residues: Large ribosomal subunit protein bL21 (103 aa).

It belongs to the bacterial ribosomal protein bL21 family. As to quaternary structure, part of the 50S ribosomal subunit. Contacts protein L20.

In terms of biological role, this protein binds to 23S rRNA in the presence of protein L20. This is Large ribosomal subunit protein bL21 from Psychrobacter sp. (strain PRwf-1).